Here is a 79-residue protein sequence, read N- to C-terminus: RNA-binding protein Hfq (79 aa).

The region spanning D10 to I70 is the Sm domain.

This sequence belongs to the Hfq family. Homohexamer.

Functionally, RNA chaperone that binds small regulatory RNA (sRNAs) and mRNAs to facilitate mRNA translational regulation in response to envelope stress, environmental stress and changes in metabolite concentrations. Also binds with high specificity to tRNAs. The sequence is that of RNA-binding protein Hfq from Bartonella bacilliformis (strain ATCC 35685 / KC583 / Herrer 020/F12,63).